The primary structure comprises 412 residues: Putative competence-damage inducible protein (412 aa).

The protein belongs to the CinA family.

This Bacillus cereus (strain AH187) protein is Putative competence-damage inducible protein.